Reading from the N-terminus, the 219-residue chain is MRFALTLTAFVGSVAALSITSPKKDQDVDLSEKTTIEWSSVSSDPSSFDIYLVKMNSYPPVNKLVAENVKTSEGSYTIDGVSADNGSGYQINFVSRDPQNTGILAQSQQFKVESSGSSTTSDSTSSASATGSASTSSSSTGTVSSTASASATASASATASSTLSKSASGTASKTASATGSETSGASASSTSSPTTTPNGAGSLTVPAGSLLLGLVALAL.

An N-terminal signal peptide occupies residues 1–16 (MRFALTLTAFVGSVAA). Asparagine 85 carries N-linked (GlcNAc...) asparagine glycosylation. Disordered stretches follow at residues 107–144 (SQQF…GTVS) and 160–205 (SSTL…SLTV). Low complexity predominate over residues 114 to 144 (SSGSSTTSDSTSSASATGSASTSSSSTGTVS). Residue asparagine 198 is the site of GPI-like-anchor amidated asparagine attachment. Positions 199–219 (GAGSLTVPAGSLLLGLVALAL) are cleaved as a propeptide — removed in mature form.

This sequence belongs to the UPF0619 family. The GPI-like anchor contains a phosphoceramide lipid group. The anchor position has not been determined.

The protein localises to the cell membrane. The chain is UPF0619 GPI-anchored membrane protein AFUA_3G00880 from Aspergillus fumigatus (strain ATCC MYA-4609 / CBS 101355 / FGSC A1100 / Af293) (Neosartorya fumigata).